Reading from the N-terminus, the 374-residue chain is Flagellar P-ring protein (374 aa).

Residues 1–29 (MRRVRTTRLFQVACAAIVALASSAMSAHA) form the signal peptide.

The protein belongs to the FlgI family. The basal body constitutes a major portion of the flagellar organelle and consists of four rings (L,P,S, and M) mounted on a central rod.

The protein localises to the periplasm. The protein resides in the bacterial flagellum basal body. In terms of biological role, assembles around the rod to form the L-ring and probably protects the motor/basal body from shearing forces during rotation. This Bradyrhizobium sp. (strain BTAi1 / ATCC BAA-1182) protein is Flagellar P-ring protein.